Reading from the N-terminus, the 1241-residue chain is Dinoflagellate luciferase (1241 aa).

Luciferase regions lie at residues 114–465 (KTGL…IKRD), 491–842 (DQGF…TKRD), and 868–1218 (EKGF…KKRD).

This sequence belongs to the calycin superfamily. Luciferase family.

Its subcellular location is the cytoplasmic vesicle. The catalysed reaction is dinoflagellate luciferin + O2 = oxidized dinoflagellate luciferin + hnu + H2O + H(+). Its activity is regulated as follows. Regulated by pH: upon acidification, at a pH of 6.3, dinoflagellate luciferin is released from luciferin-binding protein LBP, allowing the interaction between Dinoflagellate luciferase and its substrate luciferin. In terms of biological role, emits blue light flashes with a wavelength of 475 nm during the night phase. This Lingulodinium polyedra (Dinoflagellate) protein is Dinoflagellate luciferase.